Reading from the N-terminus, the 252-residue chain is Probable NADP-dependent dehydrogenase HI_1430 (252 aa).

7 to 31 contacts NADP(+); the sequence is LVTGATAGFGLAICKKLIEAGYKVI. Ser137 contacts substrate. The Proton acceptor role is filled by Tyr150.

The protein belongs to the short-chain dehydrogenases/reductases (SDR) family.

This Haemophilus influenzae (strain ATCC 51907 / DSM 11121 / KW20 / Rd) protein is Probable NADP-dependent dehydrogenase HI_1430.